Consider the following 399-residue polypeptide: Tyrosine--tRNA ligase (399 aa).

A 'HIGH' region motif is present at residues 42 to 51 (PTAPDLHLGH). The 'KMSKS' region motif lies at 226-230 (KMSKS). Lys-229 contacts ATP. One can recognise an S4 RNA-binding domain in the interval 336 to 396 (MPIAAVLNKA…GRKAFARITL (61 aa)).

This sequence belongs to the class-I aminoacyl-tRNA synthetase family. TyrS type 2 subfamily. Homodimer.

Its subcellular location is the cytoplasm. It catalyses the reaction tRNA(Tyr) + L-tyrosine + ATP = L-tyrosyl-tRNA(Tyr) + AMP + diphosphate + H(+). In terms of biological role, catalyzes the attachment of tyrosine to tRNA(Tyr) in a two-step reaction: tyrosine is first activated by ATP to form Tyr-AMP and then transferred to the acceptor end of tRNA(Tyr). This Pseudomonas fluorescens (strain ATCC BAA-477 / NRRL B-23932 / Pf-5) protein is Tyrosine--tRNA ligase.